Consider the following 529-residue polypeptide: Cytochrome P450 monooxygenase 45 (529 aa).

A helical membrane pass occupies residues 24–44 (VLTICILALLTFVLREIVLYF). N185 and N322 each carry an N-linked (GlcNAc...) asparagine glycan. C454 contributes to the heme binding site.

It belongs to the cytochrome P450 family. Heme serves as cofactor.

The protein localises to the membrane. The protein operates within secondary metabolite biosynthesis. Functionally, cytochrome P450 monooxygenase that is able to use trans-stilbene as a substrate for oxidation. The sequence is that of Cytochrome P450 monooxygenase 45 from Postia placenta (strain ATCC 44394 / Madison 698-R) (Brown rot fungus).